A 404-amino-acid polypeptide reads, in one-letter code: Cysteine desulfurase IscS (404 aa).

Residues 75–76 (AT), asparagine 155, glutamine 183, and 203–205 (SAH) contribute to the pyridoxal 5'-phosphate site. Residue lysine 206 is modified to N6-(pyridoxal phosphate)lysine. Threonine 243 is a pyridoxal 5'-phosphate binding site. Residue cysteine 328 is the Cysteine persulfide intermediate of the active site. Cysteine 328 is a binding site for [2Fe-2S] cluster.

Belongs to the class-V pyridoxal-phosphate-dependent aminotransferase family. NifS/IscS subfamily. Homodimer. Forms a heterotetramer with IscU, interacts with other sulfur acceptors. Pyridoxal 5'-phosphate serves as cofactor.

The protein resides in the cytoplasm. It carries out the reaction (sulfur carrier)-H + L-cysteine = (sulfur carrier)-SH + L-alanine. It functions in the pathway cofactor biosynthesis; iron-sulfur cluster biosynthesis. Functionally, master enzyme that delivers sulfur to a number of partners involved in Fe-S cluster assembly, tRNA modification or cofactor biosynthesis. Catalyzes the removal of elemental sulfur atoms from cysteine to produce alanine. Functions as a sulfur delivery protein for Fe-S cluster synthesis onto IscU, an Fe-S scaffold assembly protein, as well as other S acceptor proteins. This Vibrio cholerae serotype O1 (strain M66-2) protein is Cysteine desulfurase IscS.